Reading from the N-terminus, the 225-residue chain is UPF0758 protein Shew_3481 (225 aa).

In terms of domain architecture, MPN spans 102–224; it reads ILSDPDLTRD…IVSFAERGWI (123 aa). Residues His-173, His-175, and Asp-186 each contribute to the Zn(2+) site. Positions 173–186 match the JAMM motif motif; it reads HNHPSGGAEPSHAD.

Belongs to the UPF0758 family.

The chain is UPF0758 protein Shew_3481 from Shewanella loihica (strain ATCC BAA-1088 / PV-4).